The primary structure comprises 508 residues: Putative POTE ankyrin domain family member M (508 aa).

ANK repeat units follow at residues 172–201, 205–234, 238–267, 271–300, and 304–333; these read QKRTALHLASANGNSEVVKLLLDRRCQLNI, KKRTALTKAVQCQEDECALMLLEHGTDPNI, YGNTALHYAIYNEDKLMAKALLLYGADIES, HGLTPLLLGVHEQKQQVVKFLIKKKANLNA, and YGRTVLILAVCCGSASIVSLLLEQNIDVSS. Residues 369–487 are disordered; the sequence is SSENSNPEQD…KQLSEEQNTG (119 aa). 2 stretches are compositionally biased toward basic and acidic residues: residues 377–392 and 406–421; these read QDLKLTSEEESQRLKG and EINKGGDRKVEEEMKK. The span at 476–487 shows a compositional bias: polar residues; that stretch reads TQKQLSEEQNTG.

Belongs to the POTE family.

This chain is Putative POTE ankyrin domain family member M (POTEM), found in Homo sapiens (Human).